The chain runs to 107 residues: Large ribosomal subunit protein uL24 (107 aa).

It belongs to the universal ribosomal protein uL24 family. As to quaternary structure, part of the 50S ribosomal subunit.

Its function is as follows. One of two assembly initiator proteins, it binds directly to the 5'-end of the 23S rRNA, where it nucleates assembly of the 50S subunit. One of the proteins that surrounds the polypeptide exit tunnel on the outside of the subunit. The polypeptide is Large ribosomal subunit protein uL24 (Mesomycoplasma hyopneumoniae (strain 7448) (Mycoplasma hyopneumoniae)).